We begin with the raw amino-acid sequence, 303 residues long: Quinolinate synthase (303 aa).

Residues His23 and Ser40 each coordinate iminosuccinate. Cys85 lines the [4Fe-4S] cluster pocket. Iminosuccinate-binding positions include 111–113 and Ser128; that span reads YIN. Cys171 contributes to the [4Fe-4S] cluster binding site. Residues 197-199 and Thr214 contribute to the iminosuccinate site; that span reads HPE. Cys259 contacts [4Fe-4S] cluster.

Belongs to the quinolinate synthase family. Type 2 subfamily. [4Fe-4S] cluster serves as cofactor.

It localises to the cytoplasm. It carries out the reaction iminosuccinate + dihydroxyacetone phosphate = quinolinate + phosphate + 2 H2O + H(+). Its pathway is cofactor biosynthesis; NAD(+) biosynthesis; quinolinate from iminoaspartate: step 1/1. Functionally, catalyzes the condensation of iminoaspartate with dihydroxyacetone phosphate to form quinolinate. The protein is Quinolinate synthase of Clostridium acetobutylicum (strain ATCC 824 / DSM 792 / JCM 1419 / IAM 19013 / LMG 5710 / NBRC 13948 / NRRL B-527 / VKM B-1787 / 2291 / W).